The chain runs to 175 residues: MTRTPVGSARTRPKPRKLGPQRGKALQASSRLSESPALVKKRMPDACTLGRAGIGLPKMCLHMAVRHSKAQKTGPGILQQRQKPPAPRASGGPALLGKRRGCSEAGSASLEPLSSSRAAAGCLNQVPLSPFLAGPRNTRRLPAPERERIELAATLCLEGWPLRCLASKGKLHCVY.

Disordered regions lie at residues 1–39 and 70–100; these read MTRTPVGSARTRPKPRKLGPQRGKALQASSRLSESPALV and AQKTGPGILQQRQKPPAPRASGGPALLGKRR.

In Homo sapiens (Human), this protein is FOXL2 neighbor protein (FOXL2NB).